The following is an 88-amino-acid chain: Phosphocarrier protein HPr (88 aa).

Positions 1–88 constitute an HPr domain; sequence MEQNSYVIID…DVLSKEGLTK (88 aa). Catalysis depends on His-15, which acts as the Pros-phosphohistidine intermediate. Ser-46 bears the Phosphoserine; by HPrK/P mark.

The protein localises to the cytoplasm. Phosphorylation on Ser-46 inhibits the phosphoryl transfer from enzyme I to HPr. General (non sugar-specific) component of the phosphoenolpyruvate-dependent sugar phosphotransferase system (sugar PTS). This major carbohydrate active-transport system catalyzes the phosphorylation of incoming sugar substrates concomitantly with their translocation across the cell membrane. The phosphoryl group from phosphoenolpyruvate (PEP) is transferred to the phosphoryl carrier protein HPr by enzyme I. Phospho-HPr then transfers it to the PTS EIIA domain. Functionally, P-Ser-HPr interacts with the catabolite control protein A (CcpA), forming a complex that binds to DNA at the catabolite response elements cre, operator sites preceding a large number of catabolite-regulated genes. Thus, P-Ser-HPr is a corepressor in carbon catabolite repression (CCR), a mechanism that allows bacteria to coordinate and optimize the utilization of available carbon sources. P-Ser-HPr also plays a role in inducer exclusion, in which it probably interacts with several non-PTS permeases and inhibits their transport activity. This chain is Phosphocarrier protein HPr (ptsH), found in Staphylococcus aureus (strain MSSA476).